Reading from the N-terminus, the 320-residue chain is Endolytic peptidoglycan transglycosylase RlpA (320 aa).

This sequence belongs to the RlpA family.

Lytic transglycosylase with a strong preference for naked glycan strands that lack stem peptides. This is Endolytic peptidoglycan transglycosylase RlpA from Rickettsia typhi (strain ATCC VR-144 / Wilmington).